The following is an 811-amino-acid chain: Transmembrane protease serine 6 (811 aa).

The Cytoplasmic portion of the chain corresponds to 1-55 (MLLLFHSKRMPVAEAPQVAGGQGDGGDGEEAEPEGMFKACEDSKRKARGYLRLVP). A helical; Signal-anchor for type II membrane protein transmembrane segment spans residues 56-76 (LFVLLALLVLASAGVLLWYFL). Over 77–811 (GYKAEVMVSQ…VISWIQQVVT (735 aa)) the chain is Extracellular. The SEA domain maps to 84–209 (VSQVYSGSLR…EGLVILEASV (126 aa)). Residues asparagine 136, asparagine 184, asparagine 216, asparagine 338, asparagine 433, and asparagine 453 are each glycosylated (N-linked (GlcNAc...) asparagine). CUB domains follow at residues 213-336 (AALN…QACE) and 335-452 (CEVN…YGLY). Cysteines 335 and 366 form a disulfide. LDL-receptor class A domains lie at 457–489 (PCPG…ERNC), 490–526 (VCRA…EQCQ), and 530–567 (PCGT…EHCD). 10 cysteine pairs are disulfide-bonded: cysteine 458–cysteine 470, cysteine 464–cysteine 480, cysteine 474–cysteine 489, cysteine 491–cysteine 503, cysteine 497–cysteine 516, cysteine 510–cysteine 525, cysteine 531–cysteine 543, cysteine 538–cysteine 557, cysteine 551–cysteine 566, and cysteine 602–cysteine 618. N-linked (GlcNAc...) asparagine glycosylation occurs at asparagine 518. Positions 577–811 (IVGGAVSSEG…VISWIQQVVT (235 aa)) constitute a Peptidase S1 domain. Active-site charge relay system residues include histidine 617 and aspartate 668. 3 disulfides stabilise this stretch: cysteine 702–cysteine 768, cysteine 733–cysteine 747, and cysteine 758–cysteine 787. Serine 762 serves as the catalytic Charge relay system.

The protein belongs to the peptidase S1 family. Interacts with HJV. The single-chain zymogen undergoes autoproteolytic processing. This results in TMPRSS6 shedding from the cell surface and conversion into an activated two-chains form which is released extracellularly. The process involves a trans-activation mechanism that requires TMPRSS6 oligomerization.

Its subcellular location is the cell membrane. In terms of biological role, membrane-bound serine protease. Through the cleavage of cell surface hemojuvelin (HJV), a regulator of the expression of the iron absorption-regulating hormone hepicidin/HAMP, plays a role in iron homeostasis. The protein is Transmembrane protease serine 6 (TMPRSS6) of Homo sapiens (Human).